The following is an 85-amino-acid chain: Alpha-toxin Ac2 (85 aa).

The first 19 residues, 1–19, serve as a signal peptide directing secretion; that stretch reads MNYLVMISLALLFMTGVES. Residues 21–83 form the LCN-type CS-alpha/beta domain; sequence KDGYIVDDRN…VRTKGPGRCK (63 aa). 4 cysteine pairs are disulfide-bonded: cysteine 31/cysteine 82, cysteine 35/cysteine 55, cysteine 41/cysteine 65, and cysteine 45/cysteine 67. A Lysine amide modification is found at lysine 83.

Belongs to the long (4 C-C) scorpion toxin superfamily. Sodium channel inhibitor family. Alpha subfamily. As to expression, expressed by the venom gland.

It localises to the secreted. Its function is as follows. Alpha toxins bind voltage-independently at site-3 of sodium channels (Nav) and inhibit the inactivation of the activated channels, thereby blocking neuronal transmission. The chain is Alpha-toxin Ac2 from Androctonus crassicauda (Arabian fat-tailed scorpion).